We begin with the raw amino-acid sequence, 62 residues long: Amolopin-p-MT1 (62 aa).

A signal peptide spans Met1–Cys22. Residues Glu23–Val42 constitute a propeptide, removed in mature form.

The protein belongs to the frog skin active peptide (FSAP) family. Brevinin subfamily. As to expression, expressed by the skin glands.

The protein resides in the secreted. Antimicrobial peptide. Active against a variety of Gram-negative and Gram-positive bacterial strains. Not active against fungi. Shows weak hemolytic activity against human erythrocytes. This Amolops mantzorum (Sichuan torrent frog) protein is Amolopin-p-MT1.